A 140-amino-acid polypeptide reads, in one-letter code: Short-chain diamines transporter (140 aa).

The next 4 membrane-spanning stretches (helical) occupy residues 7 to 27, 36 to 56, 79 to 99, and 105 to 125; these read IFHAVLFELMALAIIVPAAAL, LALVGIGLSLYTVVWNYIYNL, VGFEGGLIFISIPVIAWFLEI, and LMLEAGFLVFFLFYATGFNWL.

It belongs to the proteobacterial antimicrobial compound efflux (PACE) (TC 2.A.117) family.

It is found in the cell inner membrane. Its function is as follows. Mediates the efflux of short-chain diamines when energized by an electrochemical gradient. Confers resistance to chlorhexidine, benzalkonium, proflavine and acriflavine. Mediates efflux of both proflavine and acriflavine via an energy-dependent mechanism. This is Short-chain diamines transporter from Vibrio parahaemolyticus serotype O3:K6 (strain RIMD 2210633).